Reading from the N-terminus, the 161-residue chain is Probable chemoreceptor glutamine deamidase CheD (161 aa).

This sequence belongs to the CheD family.

It carries out the reaction L-glutaminyl-[protein] + H2O = L-glutamyl-[protein] + NH4(+). Functionally, probably deamidates glutamine residues to glutamate on methyl-accepting chemotaxis receptors (MCPs), playing an important role in chemotaxis. The protein is Probable chemoreceptor glutamine deamidase CheD of Lachnoclostridium phytofermentans (strain ATCC 700394 / DSM 18823 / ISDg) (Clostridium phytofermentans).